The primary structure comprises 423 residues: UPF0229 protein VV1_2091 (423 aa).

Residues Gln-81–Gly-111 are disordered. Residues Gly-93 to Asp-102 are compositionally biased toward gly residues.

It belongs to the UPF0229 family.

The chain is UPF0229 protein VV1_2091 from Vibrio vulnificus (strain CMCP6).